A 157-amino-acid polypeptide reads, in one-letter code: Small ribosomal subunit protein uS7 (157 aa).

The protein belongs to the universal ribosomal protein uS7 family. Part of the 30S ribosomal subunit. Contacts proteins S9 and S11.

One of the primary rRNA binding proteins, it binds directly to 16S rRNA where it nucleates assembly of the head domain of the 30S subunit. Is located at the subunit interface close to the decoding center, probably blocks exit of the E-site tRNA. The chain is Small ribosomal subunit protein uS7 from Chlamydia felis (strain Fe/C-56) (Chlamydophila felis).